A 90-amino-acid polypeptide reads, in one-letter code: U7-theraphotoxin-Hhn1i (90 aa).

The signal sequence occupies residues 1–19 (MKTAIFTVVLALAVFAVLS). Residues 20-50 (FGWEANEKALSEEFTELIHEKEAASETEARE) constitute a propeptide that is removed on maturation. 3 cysteine pairs are disulfide-bonded: C51–C65, C58–C70, and C64–C81.

This sequence belongs to the neurotoxin 10 (Hwtx-1) family. 13 (Hntx-13) subfamily. As to expression, expressed by the venom gland.

The protein localises to the secreted. Ion channel inhibitor. This Cyriopagopus hainanus (Chinese bird spider) protein is U7-theraphotoxin-Hhn1i.